We begin with the raw amino-acid sequence, 114 residues long: Adapter SH3BGRL (114 aa).

A required for interaction with HER2 region spans residues 13-50 (SMAIKKKQQDVLGFLEANKIGFEEKDIAANEENRKWMR). Positions 54 to 71 (PENSRPATGYPLPPQIFN) are required for interaction with PFN1, HER2, and ATG12. An SH3-binding motif is present at residues 61–67 (TGYPLPP).

The protein belongs to the SH3BGR family. In terms of assembly, monomer. Interacts with PFN1/Profilin-1. Interacts with ERBB2. Interacts with ATG12. Interacts with BECN1. Interacts with translating ribosomes.

The protein localises to the cytoplasm. It is found in the cytosol. Its subcellular location is the cell membrane. Functionally, appears to function as an adapter protein that bridges proteins together or proteins with mRNAs. May function as a ubiquitin ligase-substrate adapter. Additionally, associates with translating cytoplasmic ribosomes and may promote the expression of specific mRNAs. This Bos taurus (Bovine) protein is Adapter SH3BGRL (SH3BGRL).